We begin with the raw amino-acid sequence, 222 residues long: Cytochrome b6 (222 aa).

A helical transmembrane segment spans residues 39–59 (IFYCLGGITLVCFLIQFATGF). C42 serves as a coordination point for heme c. H93 and H107 together coordinate heme b. A run of 3 helical transmembrane segments spans residues 97–117 (ASMM…TGGF), 123–143 (LTWV…VTGY), and 193–213 (LHTF…FLMI). The heme b site is built by H194 and H209.

Belongs to the cytochrome b family. PetB subfamily. The 4 large subunits of the cytochrome b6-f complex are cytochrome b6, subunit IV (17 kDa polypeptide, PetD), cytochrome f and the Rieske protein, while the 4 small subunits are PetG, PetL, PetM and PetN. The complex functions as a dimer. The cofactor is heme b. Heme c serves as cofactor.

The protein localises to the cellular thylakoid membrane. Its function is as follows. Component of the cytochrome b6-f complex, which mediates electron transfer between photosystem II (PSII) and photosystem I (PSI), cyclic electron flow around PSI, and state transitions. The protein is Cytochrome b6 of Trichodesmium erythraeum (strain IMS101).